Consider the following 314-residue polypeptide: Probable cell division protein WhiA (314 aa).

The segment at residues 274–308 (SLKELGEMVSTGTISKSGVNHRLRKLNELADKIRS) is a DNA-binding region (H-T-H motif).

Belongs to the WhiA family.

Its function is as follows. Involved in cell division and chromosome segregation. This chain is Probable cell division protein WhiA, found in Staphylococcus carnosus (strain TM300).